Here is a 475-residue protein sequence, read N- to C-terminus: Ankyrin repeat, SAM and basic leucine zipper domain-containing protein 1 (475 aa).

Residues 1 to 38 (MATGSLRGLAVAGGGESSDSEDDGWEIGYLDRPPQKLK) are disordered. A phosphoserine mark is found at S17, S18, and S20. 6 ANK repeats span residues 45–74 (EKNETFKKALTTGDTSLVKELLDSGISVDS), 78–107 (YGWTPLMYAASVANVELVRVLLDRGANASF), 110–144 (DKQTILITACSARGSEEQILKCVELLLSRNADPNV), 148–177 (RLMTPIMYAARDGHPQVVALLVAHGAEVNI), 181–210 (NGYTALTWAARQGHKSVVLKLLELGANKTL), and 214–243 (DGKTPSEIAKRNKHLEIFNLLSLTLNPLEG). The SAM domain occupies 272–334 (SYTAFGDLEI…KILAALKELE (63 aa)).

As to quaternary structure, interacts with DDX4, PIWIL1, RANBP9 and TDRD1.

It is found in the cytoplasm. In terms of biological role, plays a central role during spermatogenesis by repressing transposable elements and preventing their mobilization, which is essential for the germline integrity. Acts via the piRNA metabolic process, which mediates the repression of transposable elements during meiosis by forming complexes composed of piRNAs and Piwi proteins and governs the methylation and subsequent repression of transposons. Its association with pi-bodies suggests a participation in the primary piRNAs metabolic process. Required prior to the pachytene stage to facilitate the production of multiple types of piRNAs, including those associated with repeats involved in the regulation of retrotransposons. May act by mediating protein-protein interactions during germ cell maturation. The sequence is that of Ankyrin repeat, SAM and basic leucine zipper domain-containing protein 1 (ASZ1) from Oryctolagus cuniculus (Rabbit).